A 120-amino-acid chain; its full sequence is Aspartate 1-decarboxylase (120 aa).

S25 (schiff-base intermediate with substrate; via pyruvic acid) is an active-site residue. Position 25 is a pyruvic acid (Ser) (S25). T57 is a binding site for substrate. Residue Y58 is the Proton donor of the active site. 73 to 75 provides a ligand contact to substrate; sequence GAA.

Belongs to the PanD family. In terms of assembly, heterooctamer of four alpha and four beta subunits. The cofactor is pyruvate. Is synthesized initially as an inactive proenzyme, which is activated by self-cleavage at a specific serine bond to produce a beta-subunit with a hydroxyl group at its C-terminus and an alpha-subunit with a pyruvoyl group at its N-terminus.

It is found in the cytoplasm. The enzyme catalyses L-aspartate + H(+) = beta-alanine + CO2. It functions in the pathway cofactor biosynthesis; (R)-pantothenate biosynthesis; beta-alanine from L-aspartate: step 1/1. Catalyzes the pyruvoyl-dependent decarboxylation of aspartate to produce beta-alanine. The chain is Aspartate 1-decarboxylase from Coprothermobacter proteolyticus (strain ATCC 35245 / DSM 5265 / OCM 4 / BT).